The sequence spans 289 residues: Glucosamine-6-phosphate deaminase 1 (289 aa).

The residue at position 64 (Lys-64) is an N6-acetyllysine. The Proton acceptor; for enolization step role is filled by Asp-72. Residue Asp-141 is the For ring-opening step of the active site. The active-site Proton acceptor; for ring-opening step is the His-143. Glu-148 (for ring-opening step) is an active-site residue. A Phosphothreonine modification is found at Thr-161.

This sequence belongs to the glucosamine/galactosamine-6-phosphate isomerase family. As to quaternary structure, homohexamer.

It localises to the cytoplasm. It catalyses the reaction alpha-D-glucosamine 6-phosphate + H2O = beta-D-fructose 6-phosphate + NH4(+). The protein operates within nucleotide-sugar biosynthesis; UDP-N-acetyl-alpha-D-glucosamine biosynthesis; alpha-D-glucosamine 6-phosphate from D-fructose 6-phosphate: step 1/1. Allosterically activated by N-acetylglucosamine-6-phosphate (GlcNAc6P). Its function is as follows. Catalyzes the reversible conversion of alpha-D-glucosamine 6-phosphate (GlcN-6P) into beta-D-fructose 6-phosphate (Fru-6P) and ammonium ion, a regulatory reaction step in de novo uridine diphosphate-N-acetyl-alpha-D-glucosamine (UDP-GlcNAc) biosynthesis via hexosamine pathway. Deamination is coupled to aldo-keto isomerization mediating the metabolic flux from UDP-GlcNAc toward Fru-6P. At high ammonium level can drive amination and isomerization of Fru-6P toward hexosamines and UDP-GlcNAc synthesis. Has a role in fine tuning the metabolic fluctuations of cytosolic UDP-GlcNAc and their effects on hyaluronan synthesis that occur during tissue remodeling. Seems to trigger calcium oscillations in mammalian eggs. These oscillations serve as the essential trigger for egg activation and early development of the embryo. This is Glucosamine-6-phosphate deaminase 1 from Pongo abelii (Sumatran orangutan).